The chain runs to 162 residues: Caveolin-2 (162 aa).

The Cytoplasmic segment spans residues 1–86 (MGLETEKADV…FEISKYVMYK (86 aa)). At Y19 the chain carries Phosphotyrosine; by SRC. 2 positions are modified to phosphoserine: S20 and S23. Y27 bears the Phosphotyrosine; by SRC mark. Phosphoserine is present on S36. The helical intramembrane region spans 87 to 107 (FLTVFLAIPLAFIAGILFATL). Topologically, residues 108–162 (SCLHIWILMPFVKTCLMVLPSVQTIWKSVTDVIIAPLCTSVGRCFSSVSLQLSQD) are cytoplasmic.

This sequence belongs to the caveolin family. As to quaternary structure, monomer or homodimer. Interacts with CAV1; the interaction forms a stable heterooligomeric complex that is required for targeting to lipid rafts and for caveolae formation. Tyrosine phosphorylated forms do not form heterooligomers with the Tyr-19-phosphorylated form existing as a monomer or dimer, and the Tyr-27-form as a monomer only. Interacts (tyrosine phosphorylated form) with the SH2 domain-containing proteins, RASA1, NCK1 and SRC. Interacts (tyrosine phosphorylated form) with INSR, the interaction (Tyr-27-phosphorylated form) is increased on insulin stimulation. Interacts (Tyr-19 phosphorylated form) with MAPK1 (phosphorylated form); the interaction, promoted by insulin, leads to nuclear location and MAPK1 activation. Interacts with STAT3; the interaction is increased on insulin-induced tyrosine phosphorylation leading to STAT activation. Phosphorylated on serine and tyrosine residues. CAV1 promotes phosphorylation on Ser-23 which then targets the complex to the plasma membrane, lipid rafts and caveolae. Phosphorylation on Ser-36 appears to modulate mitosis in endothelial cells. Phosphorylation on both Tyr-19 and Tyr-27 is required for insulin-induced 'Ser-727' phosphorylation of STAT3 and its activation. Phosphorylation on Tyr-19 is required for insulin-induced phosphorylation of MAPK1 and DNA binding of STAT3. Tyrosine phosphorylation is induced by both EGF and insulin (By. similarity).

The protein localises to the nucleus. It localises to the cytoplasm. It is found in the golgi apparatus membrane. The protein resides in the cell membrane. Its subcellular location is the membrane. The protein localises to the caveola. Functionally, may act as a scaffolding protein within caveolar membranes. Interacts directly with G-protein alpha subunits and can functionally regulate their activity. Acts as an accessory protein in conjunction with CAV1 in targeting to lipid rafts and driving caveolae formation. The Ser-36 phosphorylated form has a role in modulating mitosis in endothelial cells. Positive regulator of cellular mitogenesis of the MAPK signaling pathway. Required for the insulin-stimulated nuclear translocation and activation of MAPK1 and STAT3, and the subsequent regulation of cell cycle progression. The protein is Caveolin-2 (CAV2) of Pan troglodytes (Chimpanzee).